Reading from the N-terminus, the 274-residue chain is 2,3,4,5-tetrahydropyridine-2,6-dicarboxylate N-succinyltransferase (274 aa).

Substrate-binding residues include Arg104 and Asp141.

It belongs to the transferase hexapeptide repeat family. Homotrimer.

Its subcellular location is the cytoplasm. It catalyses the reaction (S)-2,3,4,5-tetrahydrodipicolinate + succinyl-CoA + H2O = (S)-2-succinylamino-6-oxoheptanedioate + CoA. Its pathway is amino-acid biosynthesis; L-lysine biosynthesis via DAP pathway; LL-2,6-diaminopimelate from (S)-tetrahydrodipicolinate (succinylase route): step 1/3. This Shewanella putrefaciens (strain CN-32 / ATCC BAA-453) protein is 2,3,4,5-tetrahydropyridine-2,6-dicarboxylate N-succinyltransferase.